The sequence spans 445 residues: 23S rRNA (uracil(1939)-C(5))-methyltransferase RlmD (445 aa).

The region spanning 12 to 70 is the TRAM domain; sequence SKQLSSKLSLKVTQLDHLGAGIAHHDGKIVFINGALPGETVSVQLTEQKKKFARAKLLK. Residues cysteine 83, cysteine 89, cysteine 92, and cysteine 171 each coordinate [4Fe-4S] cluster. S-adenosyl-L-methionine contacts are provided by glutamine 278, phenylalanine 307, asparagine 312, glutamate 328, aspartate 355, and aspartate 375. Residue cysteine 401 is the Nucleophile of the active site.

Belongs to the class I-like SAM-binding methyltransferase superfamily. RNA M5U methyltransferase family. RlmD subfamily.

It catalyses the reaction uridine(1939) in 23S rRNA + S-adenosyl-L-methionine = 5-methyluridine(1939) in 23S rRNA + S-adenosyl-L-homocysteine + H(+). In terms of biological role, catalyzes the formation of 5-methyl-uridine at position 1939 (m5U1939) in 23S rRNA. This Shewanella halifaxensis (strain HAW-EB4) protein is 23S rRNA (uracil(1939)-C(5))-methyltransferase RlmD.